The following is a 283-amino-acid chain: 4-diphosphocytidyl-2-C-methyl-D-erythritol kinase (283 aa).

Residue Lys10 is part of the active site. Pro99–Ser109 serves as a coordination point for ATP. Residue Asp141 is part of the active site.

The protein belongs to the GHMP kinase family. IspE subfamily. As to quaternary structure, homodimer.

The catalysed reaction is 4-CDP-2-C-methyl-D-erythritol + ATP = 4-CDP-2-C-methyl-D-erythritol 2-phosphate + ADP + H(+). The protein operates within isoprenoid biosynthesis; isopentenyl diphosphate biosynthesis via DXP pathway; isopentenyl diphosphate from 1-deoxy-D-xylulose 5-phosphate: step 3/6. Catalyzes the phosphorylation of the position 2 hydroxy group of 4-diphosphocytidyl-2C-methyl-D-erythritol. This chain is 4-diphosphocytidyl-2-C-methyl-D-erythritol kinase, found in Salmonella typhi.